A 208-amino-acid polypeptide reads, in one-letter code: ATP-dependent dethiobiotin synthetase BioD (208 aa).

An ATP-binding site is contributed by 11–16; sequence EVGKTF. Threonine 15 is a binding site for Mg(2+). Lysine 31 is a catalytic residue. Residue serine 35 coordinates substrate. ATP is bound by residues aspartate 42, 95–98, and 155–156; these read ETSG and NQ. Residues aspartate 42 and glutamate 95 each coordinate Mg(2+).

It belongs to the dethiobiotin synthetase family. As to quaternary structure, homodimer. The cofactor is Mg(2+).

It is found in the cytoplasm. It catalyses the reaction (7R,8S)-7,8-diammoniononanoate + CO2 + ATP = (4R,5S)-dethiobiotin + ADP + phosphate + 3 H(+). Its pathway is cofactor biosynthesis; biotin biosynthesis; biotin from 7,8-diaminononanoate: step 1/2. In terms of biological role, catalyzes a mechanistically unusual reaction, the ATP-dependent insertion of CO2 between the N7 and N8 nitrogen atoms of 7,8-diaminopelargonic acid (DAPA, also called 7,8-diammoniononanoate) to form a ureido ring. The sequence is that of ATP-dependent dethiobiotin synthetase BioD from Chlamydia felis (strain Fe/C-56) (Chlamydophila felis).